Consider the following 701-residue polypeptide: Meprin A subunit beta (701 aa).

An N-terminal signal peptide occupies residues 1–22 (MDLWNLSWFLFLDALLVISGLA). Residues 23–61 (TPENFDVDGGMDQDIFDINEGLGLDLFEGDIRLDRAQIR) constitute a propeptide that is removed on maturation. Over 23-652 (TPENFDVDGG…CEKRGSTRDT (630 aa)) the chain is Extracellular. Residues 62 to 256 (NSIIGEKYRW…LKLNQLYNCS (195 aa)) form the Peptidase M12A domain. 3 cysteine pairs are disulfide-bonded: Cys103–Cys255, Cys124–Cys144, and Cys265–Cys427. Position 152 (His152) interacts with Zn(2+). Glu153 is an active-site residue. 2 residues coordinate Zn(2+): His156 and His162. 8 N-linked (GlcNAc...) asparagine glycosylation sites follow: Asn218, Asn254, Asn370, Asn421, Asn436, Asn445, Asn547, and Asn592. An MAM domain is found at 260-429 (SFMDSCSFEL…INLSETRCPH (170 aa)). The 156-residue stretch at 430-585 (HIWHIRNFTQ…GDDVYILLTV (156 aa)) folds into the MATH domain. O-linked (GalNAc...) serine glycosylation occurs at Ser593. Residues Thr594 and Thr599 are each glycosylated (O-linked (GalNAc...) threonine). Residues 595–607 (QIQLTPAPSVQDL) form a required for proteolytic processing region. O-linked (GalNAc...) serine glycosylation is present at Ser603. The EGF-like domain maps to 604–644 (VQDLCSKTTCKNDGVCTVRDGKAECRCQSGEDWWYMGERCE). Disulfide bonds link Cys608–Cys619, Cys613–Cys628, and Cys630–Cys643. A helical membrane pass occupies residues 653 to 673 (IVIAVSSTVAVFALMLIITLV). The Cytoplasmic portion of the chain corresponds to 674–701 (SVYCTRKKYRERMSSNRPNLTPQNQHAF). Residue Thr694 is modified to Phosphothreonine.

As to quaternary structure, homotetramer consisting of disulfide-linked beta subunits, or heterotetramer of two alpha and two beta subunits formed by non-covalent association of two disulfide-linked heterodimers. Interacts with MBL2 through its carbohydrate moiety. This interaction may inhibit its catalytic activity. Interacts with TSPAN8. Requires Zn(2+) as cofactor. In terms of processing, phosphorylated by PKC at multiple sites of its cytoplasmic part. Phosphorylation dcreases activity at the cell surface, leading to diminished substrate cleavage. Post-translationally, N-glycosylated; contains high mannose and/or complex biantennary structures. O-glycosylation protect the C-terminal region from proteolytic cleavage and diminish secretion, this seems to be specific to human. In terms of processing, proteolytically activated by trypsin in the intestinal lumen and kallikrein-related peptidases in other tissues. In terms of tissue distribution, the major site of expression is the brush border membrane of small intestinal and kidney epithelial cells.

Its subcellular location is the cell membrane. It is found in the secreted. The enzyme catalyses Hydrolysis of proteins, including azocasein, and peptides. Hydrolysis of 5-His-|-Leu-6, 6-Leu-|-Cys-7, 14-Ala-|-Leu-15 and 19-Cys-|-Gly-20 bonds in insulin B chain.. Its activity is regulated as follows. Strongly inhibited by fetuin-A/AHSG. Its function is as follows. Membrane metallopeptidase that sheds many membrane-bound proteins. Exhibits a strong preference for acidic amino acids at the P1' position. Known substrates include: FGF19, VGFA, IL1B, IL18, procollagen I and III, E-cadherin, KLK7, gastrin, ADAM10, tenascin-C. The presence of several pro-inflammatory cytokine among substrates implicate MEP1B in inflammation. It is also involved in tissue remodeling due to its capability to degrade extracellular matrix components. Also cleaves the amyloid precursor protein/APP, thereby releasing neurotoxic amyloid beta peptides. This Homo sapiens (Human) protein is Meprin A subunit beta (MEP1B).